We begin with the raw amino-acid sequence, 568 residues long: Natural resistance-associated macrophage protein 2 (568 aa).

The span at 1–20 shows a compositional bias: basic and acidic residues; that stretch reads MVLDPKEKMPDDGASGDHGD. The disordered stretch occupies residues 1-45; that stretch reads MVLDPKEKMPDDGASGDHGDSASLGAINPAYSNSSLPHSTGDSEE. Residues 1 to 69 lie on the Cytoplasmic side of the membrane; that stretch reads MVLDPKEKMP…EEYSCFSFRK (69 aa). Positions 30-40 are enriched in polar residues; that stretch reads AYSNSSLPHST. A helical transmembrane segment spans residues 70–90; the sequence is LWAFTGPGFLMSIAYLDPGNI. Residues 91-95 lie on the Extracellular side of the membrane; it reads ESDLQ. A helical transmembrane segment spans residues 96 to 117; sequence SGAVAGFKLLWVLLLATIVGLL. Over 118-154 the chain is Cytoplasmic; the sequence is LQRLAARLGVVTGLHLAEVCHRQYPKVPRIILWLMVE. The chain crosses the membrane as a helical span at residues 155–175; that stretch reads LAIIGSDMQEVIGSAIAINLL. Residues 176–179 lie on the Extracellular side of the membrane; it reads SAGR. Residues 180-194 form a helical membrane-spanning segment; sequence VPLWGGVLITIADTF. Over 195–208 the chain is Cytoplasmic; that stretch reads VFLFLDKYGLRKLE. The chain crosses the membrane as a helical span at residues 209 to 229; that stretch reads AFFGFLITIMALTFGYEYITV. Residues 230–255 lie on the Extracellular side of the membrane; the sequence is KPSQSQVLRGMFVPSCPGCRTPQVEQ. A helical membrane pass occupies residues 256-276; it reads AVGIVGAVIMPHNMYLHSALV. The Cytoplasmic segment spans residues 277–301; it reads KSRQVNRANKQEVREANKYFFIESC. The helical transmembrane segment at 302–322 threads the bilayer; it reads IALFVSFIINVFVVSVFAEAF. At 323–360 the chain is on the extracellular side; sequence FEKTNKQVVEVCKNNSSPHADLFPSDNSTLAVDIYKGG. 2 N-linked (GlcNAc...) asparagine glycosylation sites follow: Asn-336 and Asn-349. The helical transmembrane segment at 361 to 381 threads the bilayer; sequence VVLGCYFGPAALYIWAVGILA. The Cytoplasmic portion of the chain corresponds to 382–408; sequence AGQSSTMTGTYSGQFVMEGFLNLKWSR. A helical membrane pass occupies residues 409-429; that stretch reads FARVILTRSIAIIPTLLVAVF. The Extracellular portion of the chain corresponds to 430 to 440; it reads QDVEHLTGMND. Residues 441–461 form a helical membrane-spanning segment; sequence FLNVLQSLQLPFALIPILTFT. Residues 462 to 482 lie on the Cytoplasmic side of the membrane; the sequence is SLRPVMSEFSNGIGWRIAGGI. The helical transmembrane segment at 483-503 threads the bilayer; that stretch reads LVLIVCSINMYFVVVYVQELG. The Extracellular portion of the chain corresponds to 504-506; that stretch reads HVA. A helical membrane pass occupies residues 507 to 527; sequence LYVVAAVVSVAYLTFVFYLGW. Topologically, residues 528–568 are cytoplasmic; sequence QCLIALGLSFLDCGRSYRLGLTAQPELYLLNTVDADSVVSR. A required for early endosome targeting region spans residues 555–559; it reads YLLNT. Phosphoserine is present on residues Leu-556, Ser-564, and Ser-567.

The protein belongs to the NRAMP family. Forms a complex with NDFIP1 and NEDD4L, in cortical neurons, in response to iron and cobalt exposure; this interaction leads to SLC11A2 ubiquitination by NEDD4L and proteasome-dependent degradation. Interacts with NDFIP1, NDFIP2 and WWP2; this interaction leads to SLC11A2 ubiquitination by WWP2 and subsequent proteasome-dependent degradation. Interacts with COX2 and TOM6 at the outer mitochondrion membrane. Interacts with ARRDC1; this interaction regulates the incorporation of SLC11A2 into extracellular vesicles through an ubiquitination-dependent mechanism. Interacts with ARRDC4; controls the incorporation of SLC11A2 into extracellular vesicles through an ubiquitination-dependent mechanism. Post-translationally, ubiquitinated by WWP2. In terms of processing, N-glycosylated. In terms of tissue distribution, abundantly expressed in erythroid precursor cells (at protein level). As to expression, expressed in duodenum (at protein level).

The protein resides in the golgi apparatus. It is found in the trans-Golgi network membrane. The protein localises to the early endosome membrane. Its subcellular location is the recycling endosome membrane. It localises to the cell membrane. The protein resides in the late endosome membrane. It is found in the lysosome membrane. The protein localises to the apical cell membrane. Its subcellular location is the mitochondrion outer membrane. It localises to the extracellular vesicle membrane. It catalyses the reaction Fe(2+)(in) + H(+)(in) = Fe(2+)(out) + H(+)(out). It carries out the reaction Co(2+)(out) + H(+)(out) = Co(2+)(in) + H(+)(in). The catalysed reaction is Cd(2+)(out) + H(+)(out) = Cd(2+)(in) + H(+)(in). The enzyme catalyses Mn(2+)(in) + H(+)(in) = Mn(2+)(out) + H(+)(out). It catalyses the reaction Zn(2+)(out) + H(+)(out) = Zn(2+)(in) + H(+)(in). It carries out the reaction Ni(2+)(out) + H(+)(out) = Ni(2+)(in) + H(+)(in). The catalysed reaction is H(+)(in) = H(+)(out). The enzyme catalyses Fe(2+)(in) = Fe(2+)(out). Its function is as follows. Proton-coupled metal ion symporter operating with a proton to metal ion stoichiometry of 1:1. Selectively transports various divalent metal cations, in decreasing affinity: Cd(2+) &gt; Fe(2+) &gt; Co(2+), Mn(2+) &gt;&gt; Zn(2+), Ni(2+), VO(2+). Essential for maintenance of iron homeostasis by modulating intestinal absorption of dietary Fe(2+) and TF-associated endosomal Fe(2+) transport in erythroid precursors and other cells. Enables Fe(2+) and Mn(2+) ion entry into mitochondria, and is thus expected to promote mitochondrial heme synthesis, iron-sulfur cluster biogenesis and antioxidant defense. Can mediate uncoupled fluxes of either protons or metal ions. The sequence is that of Natural resistance-associated macrophage protein 2 (Slc11a2) from Mus musculus (Mouse).